Consider the following 364-residue polypeptide: UDP-N-acetylglucosamine--N-acetylmuramyl-(pentapeptide) pyrophosphoryl-undecaprenol N-acetylglucosamine transferase (364 aa).

Residues 10–12, Asn-124, Arg-166, Ser-196, Ile-252, and Gln-297 each bind UDP-N-acetyl-alpha-D-glucosamine; that span reads TGG.

This sequence belongs to the glycosyltransferase 28 family. MurG subfamily.

Its subcellular location is the cell membrane. The enzyme catalyses di-trans,octa-cis-undecaprenyl diphospho-N-acetyl-alpha-D-muramoyl-L-alanyl-D-glutamyl-meso-2,6-diaminopimeloyl-D-alanyl-D-alanine + UDP-N-acetyl-alpha-D-glucosamine = di-trans,octa-cis-undecaprenyl diphospho-[N-acetyl-alpha-D-glucosaminyl-(1-&gt;4)]-N-acetyl-alpha-D-muramoyl-L-alanyl-D-glutamyl-meso-2,6-diaminopimeloyl-D-alanyl-D-alanine + UDP + H(+). Its pathway is cell wall biogenesis; peptidoglycan biosynthesis. Cell wall formation. Catalyzes the transfer of a GlcNAc subunit on undecaprenyl-pyrophosphoryl-MurNAc-pentapeptide (lipid intermediate I) to form undecaprenyl-pyrophosphoryl-MurNAc-(pentapeptide)GlcNAc (lipid intermediate II). The polypeptide is UDP-N-acetylglucosamine--N-acetylmuramyl-(pentapeptide) pyrophosphoryl-undecaprenol N-acetylglucosamine transferase (Ruminiclostridium cellulolyticum (strain ATCC 35319 / DSM 5812 / JCM 6584 / H10) (Clostridium cellulolyticum)).